The following is a 453-amino-acid chain: Serine incorporator 1 (453 aa).

The N-myristoyl glycine moiety is linked to residue Gly-2. The Cytoplasmic portion of the chain corresponds to 2-39; sequence GSVLGLCSMASWIPCLCGSAPCLLCRCCPSGNNSTVTR. A helical transmembrane segment spans residues 40-60; it reads LIYALFLLVGVCVACVMLIPG. Topologically, residues 61–88 are lumenal; it reads MEEQLNKIPGFCENEKGMVPCNILVGYK. Residues 89–109 traverse the membrane as a helical segment; that stretch reads AVYRLCFGLAMFYLLLSLLMI. At 110–123 the chain is on the cytoplasmic side; that stretch reads KVKSSSDPRAAIHN. The helical transmembrane segment at 124–144 threads the bilayer; the sequence is GFWFFKFAAAIAIIIGAFFIP. The Lumenal segment spans residues 145-151; it reads EGTFTTV. Residues 152-172 traverse the membrane as a helical segment; that stretch reads WFYVGMAGAFCFILIQLVLLI. Residues 173–197 lie on the Cytoplasmic side of the membrane; sequence DFAHSWNESWVEKMEEGNSRCWYAA. A helical transmembrane segment spans residues 198–218; it reads LLSATALNYLLSLVAVVLFFV. The Lumenal portion of the chain corresponds to 219–231; that stretch reads YYTHPASCAENKA. The helical transmembrane segment at 232–252 threads the bilayer; the sequence is FISVNMLLCLGASIMSILPKI. The Cytoplasmic portion of the chain corresponds to 253–259; it reads QESQPRS. A helical transmembrane segment spans residues 260–280; the sequence is GLLQSSVITVYTMYLTWSAMT. The Lumenal portion of the chain corresponds to 281–309; it reads NEPETECNPSLLNIIGYNTTSTVSKEGQS. Residues 310-330 traverse the membrane as a helical segment; it reads VQWWHTQGIIGLILFLLCVFY. Topologically, residues 331–387 are cytoplasmic; it reads SSIRTSNNSQVNKLTLTSDESTLIEDGGARNDGSLEDGDDVHRAVDNERDGVTYSYS. A Phosphoserine modification is found at Ser-351. Thr-352 is subject to Phosphothreonine. At Ser-364 the chain carries Phosphoserine. Residues 388 to 408 form a helical membrane-spanning segment; the sequence is FFHFMLFLASLYIMMTLTNWY. Over 409–426 the chain is Lumenal; the sequence is RYEPSREMKSQWTAVWVK. A helical membrane pass occupies residues 427–447; the sequence is ISSSWIGIVLYVWTLVAPLVL. Over 448–453 the chain is Cytoplasmic; that stretch reads TNRDFD.

It belongs to the TDE1 family. Interacts with SPTLC1.

It is found in the endoplasmic reticulum membrane. Its function is as follows. Enhances the incorporation of serine into phosphatidylserine and sphingolipids. This Bos taurus (Bovine) protein is Serine incorporator 1 (SERINC1).